A 404-amino-acid polypeptide reads, in one-letter code: MSAPTFAEDPVTQRPALQSADFRLTVRQNPERARVAGGKEKERKAVDPPPIIQLKIDESKDPGQNYLQSPFYFMCCTLYNATEDTPATTAQSTALAGTLVSSLHRLKDTDNMEGGFFVFGDLSVKIEGEFRLKFNLFEMREVKRCGGSRDEVVYIKSILSKPFTVLPPKNFPGMTESTWLSRSFADQGVKLRIRKEARTLLKRPLNRAEPDYPAPPTQPRTPERSGASSQQMVAAYQTNRDYPFYNGPDAKRPRSSVDMSGRGLYEGDARYSYPPHAANPYQGQTYQQGMMQGYPTAGAGVSDYAIRQAQQGSTPTPFGSADESIGSIRSPGAGGYIGQPRYQSYSGAQMPYNLASSTQMSQMGESTPGRTGQAANMGGIVSGQSFSQSAGHMQSPSQVPPAWG.

3 disordered regions span residues 1–46 (MSAP…RKAV), 200–231 (LLKR…SSQQ), and 382–404 (SGQS…PAWG). The Velvet domain occupies 17 to 194 (LQSADFRLTV…ADQGVKLRIR (178 aa)). A compositionally biased stretch (basic and acidic residues) spans 29 to 46 (NPERARVAGGKEKERKAV). The segment covering 382–397 (SGQSFSQSAGHMQSPS) has biased composition (polar residues).

Belongs to the velvet family. VosA subfamily. Forms a heterodimeric complex with RYP3; the formation of the RYP2-RYP3 complex is light-dependent.

The protein localises to the nucleus. Component of the RYP2-RYP3 heterodimeric complex that plays a dual role in activating genes associated with spore maturation and repressing certain development-associated genes. The complex binds DNA through the DNA-binding domain of vosA that recognizes an 11-nucleotide consensus sequence 5'-CTGGCCGCGGC-3' consisting of two motifs in the promoters of key developmental regulatory genes. Required for viable spore production and regulation of sporulation in response to temperature and for the switch to yeast-form in the presence of host cells. This chain is Spore development regulator RYP2, found in Ajellomyces capsulatus (Darling's disease fungus).